Here is an 84-residue protein sequence, read N- to C-terminus: Small ribosomal subunit protein uS17 (84 aa).

The protein belongs to the universal ribosomal protein uS17 family. Part of the 30S ribosomal subunit.

Its function is as follows. One of the primary rRNA binding proteins, it binds specifically to the 5'-end of 16S ribosomal RNA. The protein is Small ribosomal subunit protein uS17 of Buchnera aphidicola subsp. Cinara cedri (strain Cc).